We begin with the raw amino-acid sequence, 458 residues long: Probable plasmid replicative DNA helicase (458 aa).

The 265-residue stretch at 194–458 (KIDYVDGLPT…GKFTIQKEAW (265 aa)) folds into the SF4 helicase domain. ATP is bound at residue 225 to 232 (ARPAMGKT).

The protein belongs to the helicase family. DnaB subfamily. In terms of assembly, homohexamer.

It catalyses the reaction Couples ATP hydrolysis with the unwinding of duplex DNA at the replication fork by translocating in the 5'-3' direction. This creates two antiparallel DNA single strands (ssDNA). The leading ssDNA polymer is the template for DNA polymerase III holoenzyme which synthesizes a continuous strand.. The enzyme catalyses ATP + H2O = ADP + phosphate + H(+). A replicative DNA helicase, it participates in initiation and elongation during DNA replication. Travels ahead of the DNA replisome, separating dsDNA into templates for DNA synthesis. A processive ATP-dependent 5'-3' DNA helicase it has DNA-dependent ATPase activity. The chain is Probable plasmid replicative DNA helicase from Chlamydia psittaci (Chlamydophila psittaci).